Consider the following 275-residue polypeptide: 6-deoxy-6-sulfo-D-fructose transketolase subunit SqwG (275 aa).

It belongs to the transketolase family. As to quaternary structure, forms a complex with SqwH. Thiamine diphosphate is required as a cofactor.

It catalyses the reaction 6-deoxy-6-sulfo-D-fructose + D-glyceraldehyde 3-phosphate = 4-deoxy-4-sulfo-D-erythrose + D-xylulose 5-phosphate. The enzyme catalyses 4-deoxy-4-sulfo-D-erythrulose + D-glyceraldehyde 3-phosphate = sulfoacetaldehyde + D-xylulose 5-phosphate. In terms of biological role, part of the sulfo-TK pathway, a D-sulfoquinovose degradation pathway that produces 2-hydroxyethane-1-sulfonate (isethionate). Catalyzes two steps of the pathway: the formation of 4-deoxy-4-sulfoerythrose (SE) and xylulose 5-phosphate from 6-deoxy-6-sulfo-D-fructose (SF) and glyceraldehyde 3-phosphate, and the formation of sulfoacetaldehyde (SA) and xylulose 5-phosphate from 4-deoxy-4-sulfo-D-erythrulose (SEu) and glyceraldehyde 3-phosphate. This is 6-deoxy-6-sulfo-D-fructose transketolase subunit SqwG from Clostridium sp. (strain MSTE9).